Reading from the N-terminus, the 198-residue chain is Neutrophil gelatinase-associated lipocalin (198 aa).

Residues 1–20 (MPLGLLWLGLALLGALHAQA) form the signal peptide. Glutamine 21 carries the post-translational modification Pyrrolidone carboxylic acid. 72–74 (YAT) lines the a carboxymycobactin pocket. A glycan (N-linked (GlcNAc...) asparagine) is linked at asparagine 85. A disulfide bridge links cysteine 96 with cysteine 195. Residue tyrosine 126 participates in enterobactin binding. 3 residues coordinate a carboxymycobactin: lysine 145, lysine 154, and tyrosine 158. Enterobactin is bound at residue lysine 154.

The protein belongs to the calycin superfamily. Lipocalin family. As to quaternary structure, monomer. Homodimer; disulfide-linked. Heterodimer; disulfide-linked with MMP9. Detected in neutrophils (at protein level). Expressed in bone marrow and in tissues that are prone to exposure to microorganism. High expression is found in bone marrow as well as in uterus, prostate, salivary gland, stomach, appendix, colon, trachea and lung. Expressed in the medullary tubules of the kidney. Not found in the small intestine or peripheral blood leukocytes.

The protein localises to the secreted. The protein resides in the cytoplasmic granule lumen. Its subcellular location is the cytoplasmic vesicle lumen. Its function is as follows. Iron-trafficking protein involved in multiple processes such as apoptosis, innate immunity and renal development. Binds iron through association with 2,3-dihydroxybenzoic acid (2,3-DHBA), a siderophore that shares structural similarities with bacterial enterobactin, and delivers or removes iron from the cell, depending on the context. Iron-bound form (holo-24p3) is internalized following binding to the SLC22A17 (24p3R) receptor, leading to release of iron and subsequent increase of intracellular iron concentration. In contrast, association of the iron-free form (apo-24p3) with the SLC22A17 (24p3R) receptor is followed by association with an intracellular siderophore, iron chelation and iron transfer to the extracellular medium, thereby reducing intracellular iron concentration. Involved in apoptosis due to interleukin-3 (IL3) deprivation: iron-loaded form increases intracellular iron concentration without promoting apoptosis, while iron-free form decreases intracellular iron levels, inducing expression of the proapoptotic protein BCL2L11/BIM, resulting in apoptosis. Involved in innate immunity; limits bacterial proliferation by sequestering iron bound to microbial siderophores, such as enterobactin. Can also bind siderophores from M.tuberculosis. This chain is Neutrophil gelatinase-associated lipocalin (LCN2), found in Homo sapiens (Human).